Consider the following 83-residue polypeptide: UPF0512 protein I (83 aa).

This sequence belongs to the UPF0512 family.

The sequence is that of UPF0512 protein I from Dictyostelium discoideum (Social amoeba).